We begin with the raw amino-acid sequence, 402 residues long: Peptidyl-prolyl cis-trans isomerase FKBP8 (402 aa).

Positions aspartate 28–leucine 39 are enriched in acidic residues. The tract at residues aspartate 28–glutamate 54 is disordered. One can recognise a PPIase FKBP-type domain in the interval glycine 110–glutamate 194. The stretch at alanine 211–asparagine 244 is one TPR 1 repeat. Residues lysine 239, lysine 261, lysine 263, and lysine 274 each participate in a glycyl lysine isopeptide (Lys-Gly) (interchain with G-Cter in ubiquitin) cross-link. TPR repeat units lie at residues valine 262 to asparagine 295 and isoleucine 296 to asparagine 329. Position 286 is a phosphoserine (serine 286). Residues lysine 297, lysine 304, lysine 324, lysine 330, lysine 338, lysine 341, and lysine 342 each participate in a glycyl lysine isopeptide (Lys-Gly) (interchain with G-Cter in ubiquitin) cross-link. The chain crosses the membrane as a helical span at residues tryptophan 380 to alanine 400.

In terms of assembly, homomultimers or heteromultimers (Potential). Forms heterodimer with calmodulin. When activated by calmodulin and calcium, interacts with the BH4 domain of BCL2 and weakly with BCLX isoform Bcl-X(L). Does not bind and inhibit calcineurin. Interacts with ZFYVE27; may negatively regulate ZFYVE27 phosphorylation. It depends on Ca(2+) as a cofactor. In terms of processing, ubiquitinated by PRKN during mitophagy, leading to its degradation and enhancement of mitophagy. Deubiquitinated by USP30. As to expression, detected throughout the embryonic body, in caudal neural tube, limbs and head. Detected in adult retina, brain, heart, kidney, liver, pancreas, lung, testis and urinary bladder (at protein level). Detected in adult brain, kidney, liver, testis and trigeminal nerve, and in embryo. Detected at lower levels in lung, spleen, heart and ovary. Widely expressed in forebrain. Detected in the Purkinje cell layer in the cerebellum and in hippocampus neurons.

The protein resides in the mitochondrion membrane. It carries out the reaction [protein]-peptidylproline (omega=180) = [protein]-peptidylproline (omega=0). Functionally, constitutively inactive PPiase, which becomes active when bound to calmodulin and calcium. Seems to act as a chaperone for BCL2, targets it to the mitochondria and modulates its phosphorylation state. The BCL2/FKBP8/calmodulin/calcium complex probably interferes with the binding of BCL2 to its targets. The active form of FKBP8 may therefore play a role in the regulation of apoptosis. Required for normal embryonic development. The chain is Peptidyl-prolyl cis-trans isomerase FKBP8 (Fkbp8) from Mus musculus (Mouse).